Consider the following 469-residue polypeptide: Siroheme synthase (469 aa).

The tract at residues 1 to 203 is precorrin-2 dehydrogenase /sirohydrochlorin ferrochelatase; it reads MDYLPIFTDL…GQEQDAKQEL (203 aa). Residues 22 to 23 and 43 to 44 each bind NAD(+); these read DV and PV. Position 128 is a phosphoserine (Ser128). The tract at residues 214–469 is uroporphyrinogen-III C-methyltransferase; that stretch reads GQVALIGSGP…LQQSAVVKLA (256 aa). Position 223 (Pro223) interacts with S-adenosyl-L-methionine. The active-site Proton acceptor is Asp246. The active-site Proton donor is Lys268. Residues 299–301, Val304, 329–330, Met381, and Gly410 contribute to the S-adenosyl-L-methionine site; these read GGD and TA.

In the N-terminal section; belongs to the precorrin-2 dehydrogenase / sirohydrochlorin ferrochelatase family. This sequence in the C-terminal section; belongs to the precorrin methyltransferase family.

The catalysed reaction is uroporphyrinogen III + 2 S-adenosyl-L-methionine = precorrin-2 + 2 S-adenosyl-L-homocysteine + H(+). It carries out the reaction precorrin-2 + NAD(+) = sirohydrochlorin + NADH + 2 H(+). The enzyme catalyses siroheme + 2 H(+) = sirohydrochlorin + Fe(2+). It functions in the pathway cofactor biosynthesis; adenosylcobalamin biosynthesis; precorrin-2 from uroporphyrinogen III: step 1/1. It participates in cofactor biosynthesis; adenosylcobalamin biosynthesis; sirohydrochlorin from precorrin-2: step 1/1. The protein operates within porphyrin-containing compound metabolism; siroheme biosynthesis; precorrin-2 from uroporphyrinogen III: step 1/1. Its pathway is porphyrin-containing compound metabolism; siroheme biosynthesis; siroheme from sirohydrochlorin: step 1/1. It functions in the pathway porphyrin-containing compound metabolism; siroheme biosynthesis; sirohydrochlorin from precorrin-2: step 1/1. Multifunctional enzyme that catalyzes the SAM-dependent methylations of uroporphyrinogen III at position C-2 and C-7 to form precorrin-2 via precorrin-1. Then it catalyzes the NAD-dependent ring dehydrogenation of precorrin-2 to yield sirohydrochlorin. Finally, it catalyzes the ferrochelation of sirohydrochlorin to yield siroheme. This is Siroheme synthase from Photobacterium profundum (strain SS9).